The chain runs to 337 residues: DNA-directed RNA polymerase subunit alpha (337 aa).

Positions 1–233 are alpha N-terminal domain (alpha-NTD); that stretch reads MVREKVTVST…DLFIPFLHME (233 aa). Residues 265–337 are alpha C-terminal domain (alpha-CTD); sequence KKIALKSIFI…FVIDLAKNKF (73 aa).

Belongs to the RNA polymerase alpha chain family. In plastids the minimal PEP RNA polymerase catalytic core is composed of four subunits: alpha, beta, beta', and beta''. When a (nuclear-encoded) sigma factor is associated with the core the holoenzyme is formed, which can initiate transcription.

The protein resides in the plastid. Its subcellular location is the chloroplast. It catalyses the reaction RNA(n) + a ribonucleoside 5'-triphosphate = RNA(n+1) + diphosphate. Functionally, DNA-dependent RNA polymerase catalyzes the transcription of DNA into RNA using the four ribonucleoside triphosphates as substrates. The chain is DNA-directed RNA polymerase subunit alpha from Nicotiana sylvestris (Wood tobacco).